Here is a 395-residue protein sequence, read N- to C-terminus: MPKVLVMNAGSSSHKLSLFSDKIENAGSALWKAHIEWGKKNPSYTLKNGSQESNPIYLQTTSVKQGIQEVIEKLWIGDFAVIKEVHEIEWIGHRVVHGGSLFHQPVLINASVKKDISNLSSLAPLHNPINLEGIELLEKIFPSIPHFAVFDTAFHRTMREEIKTYPIPYEWKEKGIERYGFHGISHSYCAKQIKKWIKPQETPFKLINCHLGNGASLCAIRDGFSIDTTMGFTPMEGLMMGTRSGSIDPGILIYCLRNKNLSLEELDHLLNFESGLKGIGGTSDMREIHAFKNKQSQLALDMYIYRLKTGIGAMTASLGGIDALCFTGGIGENDSYLRKKTCEELAYLGIQLDLQKNQGGNQDKEISLHDSPVKVFVIHTQEEWMIAKSCLEYLT.

Residue N8 participates in Mg(2+) binding. K15 is a binding site for ATP. R94 lines the substrate pocket. D151 acts as the Proton donor/acceptor in catalysis. ATP is bound by residues 210-214 (HLGNG), 284-286 (DMR), and 329-333 (GIGEN). A Mg(2+)-binding site is contributed by E382.

Belongs to the acetokinase family. Homodimer. Requires Mg(2+) as cofactor. Mn(2+) serves as cofactor.

The protein resides in the cytoplasm. It catalyses the reaction acetate + ATP = acetyl phosphate + ADP. Its pathway is metabolic intermediate biosynthesis; acetyl-CoA biosynthesis; acetyl-CoA from acetate: step 1/2. Functionally, catalyzes the formation of acetyl phosphate from acetate and ATP. Can also catalyze the reverse reaction. In Protochlamydia amoebophila (strain UWE25), this protein is Acetate kinase.